The following is a 303-amino-acid chain: tRNA dimethylallyltransferase 1 (303 aa).

Residue 17–24 (GPTACGKT) participates in ATP binding. 19-24 (TACGKT) provides a ligand contact to substrate. Residues 42 to 45 (DSRQ) form an interaction with substrate tRNA region.

The protein belongs to the IPP transferase family. As to quaternary structure, monomer. The cofactor is Mg(2+).

It catalyses the reaction adenosine(37) in tRNA + dimethylallyl diphosphate = N(6)-dimethylallyladenosine(37) in tRNA + diphosphate. Catalyzes the transfer of a dimethylallyl group onto the adenine at position 37 in tRNAs that read codons beginning with uridine, leading to the formation of N6-(dimethylallyl)adenosine (i(6)A). The polypeptide is tRNA dimethylallyltransferase 1 (Hahella chejuensis (strain KCTC 2396)).